The primary structure comprises 110 residues: Insulin (110 aa).

Residues 1 to 24 form the signal peptide; sequence MALWMRLLPLLALLALWGPDPVPA. 3 cysteine pairs are disulfide-bonded: Cys31–Cys96, Cys43–Cys109, and Cys95–Cys100. Residues 57–87 constitute a propeptide, c peptide; that stretch reads EAEDPQVGQVELGGGPGAGSLQPLALEGSLQ.

It belongs to the insulin family. As to quaternary structure, heterodimer of a B chain and an A chain linked by two disulfide bonds.

The protein localises to the secreted. Functionally, insulin decreases blood glucose concentration. It increases cell permeability to monosaccharides, amino acids and fatty acids. It accelerates glycolysis, the pentose phosphate cycle, and glycogen synthesis in liver. The polypeptide is Insulin (INS) (Chlorocebus aethiops (Green monkey)).